Consider the following 646-residue polypeptide: MSSQKKKISLFAFFLLTVITITLKTYFSYYVDFSLGVKGLVQNLILLMNPYSLVALVLSVFLFFKGKKAFWFMFIGGFLLTFLLYANVVYFRFFSDFLTFSTLNQVGNVESMGGAVSASFKWYDFVYFIDTLVYLFILIFKTKWLDTKAFSKKFVPVVMAASVALFFLNLAFAETDRPELLTRTFDHKYLVKYLGPYNFTVYDGVKTIENNQQKALASEDDLTKVLNYTKQRQTEPNPEYYGVAKKKNIIKIHLESFQTFLINKKVNGKEVTPFLNKLSSGKQQFTYFPNFFHQTGQGKTSDSEFTMDNSLYGLPQGSAFSLKGDNTYQSLPAILDQKQGYKSDVMHGDYKTFWNRDQVYKHFGIDKFYDATYYDMSDKNVVNLGLKDKIFFKDSANYQAKMKSPFYSHLITLTNHYPFTLDEKDATIEKSNTGDATVDGYIQTARYLDEALEEYINDLKKKGLYDNSVIMIYGDHYGISENHNNAMEKLLGEKITPAKFTDLNRTGFWIKIPGKSGGINNEYAGQVDVMPTILHLAGIDTKNYLMFGTDLFSKGHNQVVPFRNGDFITKDYKYVNGKIYSNKNNELITTQPADFEKNKKQVEKDLEMSDNVLNGDLFRFYKNPDFKKVNPSKYKYETGPKANSKK.

Residues 1 to 7 (MSSQKKK) are Cytoplasmic-facing. A helical transmembrane segment spans residues 8–28 (ISLFAFFLLTVITITLKTYFS). At 29–43 (YYVDFSLGVKGLVQN) the chain is on the extracellular side. The chain crosses the membrane as a helical span at residues 44–64 (LILLMNPYSLVALVLSVFLFF). Topologically, residues 65 to 68 (KGKK) are cytoplasmic. A helical membrane pass occupies residues 69-89 (AFWFMFIGGFLLTFLLYANVV). Residues 90–119 (YFRFFSDFLTFSTLNQVGNVESMGGAVSAS) lie on the Extracellular side of the membrane. Residues 120-140 (FKWYDFVYFIDTLVYLFILIF) form a helical membrane-spanning segment. The Cytoplasmic portion of the chain corresponds to 141–153 (KTKWLDTKAFSKK). The chain crosses the membrane as a helical span at residues 154–174 (FVPVVMAASVALFFLNLAFAE). Residues 175–646 (TDRPELLTRT…ETGPKANSKK (472 aa)) lie on the Extracellular side of the membrane. Residues glutamate 255 and threonine 300 each contribute to the Mn(2+) site. Threonine 300 is a catalytic residue. Histidine 416 lines the substrate pocket. 2 residues coordinate Mn(2+): aspartate 475 and histidine 476. Residues 623 to 638 (NPDFKKVNPSKYKYET) show a composition bias toward basic and acidic residues. The disordered stretch occupies residues 623–646 (NPDFKKVNPSKYKYETGPKANSKK).

It belongs to the LTA synthase family. Proteolytically cleaved.

Its subcellular location is the cell membrane. It is found in the secreted. It functions in the pathway cell wall biogenesis; lipoteichoic acid biosynthesis. Catalyzes the polymerization of lipoteichoic acid (LTA) polyglycerol phosphate, a reaction that presumably uses phosphatidylglycerol (PG) as substrate. Is required for staphylococcal growth and cell division process. The chain is Lipoteichoic acid synthase (ltaS) from Staphylococcus aureus (strain bovine RF122 / ET3-1).